Here is a 185-residue protein sequence, read N- to C-terminus: Ovomucoid (185 aa).

Kazal-like domains are found at residues 1–63, 64–128, and 131–185; these read VEVD…ECRE, AVPM…ECRK, and AAVS…FGKC. 9 disulfides stabilise this stretch: cysteine 5–cysteine 43, cysteine 22–cysteine 40, cysteine 30–cysteine 61, cysteine 69–cysteine 108, cysteine 86–cysteine 105, cysteine 94–cysteine 126, cysteine 137–cysteine 167, cysteine 145–cysteine 164, and cysteine 153–cysteine 185. An N-linked (GlcNAc...) asparagine glycan is attached at asparagine 174.

It is found in the secreted. The protein is Ovomucoid of Meleagris gallopavo (Wild turkey).